The primary structure comprises 98 residues: Cystatin-A (98 aa).

An N-acetylmethionine modification is found at M1. The Secondary area of contact motif lies at 46–50; the sequence is QVVAG.

It belongs to the cystatin family.

The protein resides in the cytoplasm. This is an intracellular thiol proteinase inhibitor. This is Cystatin-A (CSTA) from Bos taurus (Bovine).